Here is a 237-residue protein sequence, read N- to C-terminus: Acyl-coenzyme A thioesterase THEM4 (237 aa).

The N-terminal 36 residues, 1–36, are a transit peptide targeting the mitochondrion; sequence MLRSCTAGLRSIWALRGRREGAPRLSMDLQPARRLF. The residue at position 37 (Ser37) is a Phosphoserine. An N6-succinyllysine mark is found at Lys55, Lys66, and Lys98. The Proton donor/acceptor role is filled by Asp161. Substrate contacts are provided by residues Asn180, Lys182, and 203–204; that span reads RK. Lys204 carries the post-translational modification N6-succinyllysine.

The protein belongs to the THEM4/THEM5 thioesterase family. Homodimer and homotetramer. Interacts with AKT1 in the cytosol. In terms of processing, phosphorylated.

It is found in the cell membrane. It localises to the cell projection. The protein localises to the ruffle membrane. Its subcellular location is the cytoplasm. The protein resides in the mitochondrion. It is found in the mitochondrion inner membrane. It localises to the mitochondrion intermembrane space. The enzyme catalyses hexadecanoyl-CoA + H2O = hexadecanoate + CoA + H(+). It catalyses the reaction octanoyl-CoA + H2O = octanoate + CoA + H(+). The catalysed reaction is decanoyl-CoA + H2O = decanoate + CoA + H(+). It carries out the reaction dodecanoyl-CoA + H2O = dodecanoate + CoA + H(+). The enzyme catalyses tetradecanoyl-CoA + H2O = tetradecanoate + CoA + H(+). It catalyses the reaction (9Z)-octadecenoyl-CoA + H2O = (9Z)-octadecenoate + CoA + H(+). The catalysed reaction is (5Z,8Z,11Z,14Z)-eicosatetraenoyl-CoA + H2O = (5Z,8Z,11Z,14Z)-eicosatetraenoate + CoA + H(+). Functionally, has acyl-CoA thioesterase activity towards medium and long-chain (C14 to C18) fatty acyl-CoA substrates, and probably plays a role in mitochondrial fatty acid metabolism. Plays a role in the apoptotic process, possibly via its regulation of AKT1 activity. The chain is Acyl-coenzyme A thioesterase THEM4 (THEM4) from Bos taurus (Bovine).